Reading from the N-terminus, the 512-residue chain is Calcium-dependent protein kinase 18 (512 aa).

Positions 1–25 (MGLCSSSSARRDAGTPGGGNGAGNK) are disordered. A lipid anchor (N-myristoyl glycine) is attached at glycine 2. Residues 52–312 (YALGKLLGHG…AAQALSHEWV (261 aa)) form the Protein kinase domain. ATP is bound by residues 58–66 (LGHGQFGYT) and lysine 81. The active-site Proton acceptor is aspartate 178. The tract at residues 318 to 348 (ASDIPLDISVLHNMRQFVKYSRFKQFALRAL) is autoinhibitory domain. 4 EF-hand domains span residues 355–390 (EELSDLRDQFNAIDVDKNGTISLEELKQALAKDVPW), 392–427 (LKGPRVLEIVEAIDSNTDGLVDFEEFVAATLHVHQL), 434–469 (KWKSLSQAAFDKFDVDGDGYITSDELRMQTGLKGSI), and 472–499 (LLEEADIDRDGKISLDEFRRLLKTASMS). Aspartate 368, aspartate 370, asparagine 372, threonine 374, glutamate 379, aspartate 405, asparagine 407, aspartate 409, glutamate 416, aspartate 447, aspartate 449, aspartate 451, tyrosine 453, glutamate 458, aspartate 477, aspartate 479, aspartate 481, lysine 483, and glutamate 488 together coordinate Ca(2+).

It belongs to the protein kinase superfamily. Ser/Thr protein kinase family. CDPK subfamily. Interacts with MPK5. Autophosphorylated. Phosphorylated by MPK5.

It localises to the cell membrane. The catalysed reaction is L-seryl-[protein] + ATP = O-phospho-L-seryl-[protein] + ADP + H(+). The enzyme catalyses L-threonyl-[protein] + ATP = O-phospho-L-threonyl-[protein] + ADP + H(+). Activated by calcium. Autophosphorylation may play an important role in the regulation of the kinase activity. Its function is as follows. May play a role in signal transduction pathways that involve calcium as a second messenger. Functions upstream of MPK5 in a signaling pathway that represses defense gene expression and negatively regulates resistance to rice blast fungus. Phosphorylates MPK5 at Thr-14 and Thr-32 and activates MPK5 independently of MAP kinase kinase (MKK) phosphorylation. May be involved in arbuscular mycorrhizal presymbiotic phase signaling. Phosphorylates the elicitor-responsive protein ERG1 in vitro. Phosphorylation is calcium-dependent. The protein is Calcium-dependent protein kinase 18 of Oryza sativa subsp. japonica (Rice).